A 428-amino-acid polypeptide reads, in one-letter code: Adenosylhomocysteinase (428 aa).

Substrate contacts are provided by Thr-62, Asp-134, and Glu-159. 160–162 (TTT) contacts NAD(+). Lys-189 and Asp-193 together coordinate substrate. NAD(+) contacts are provided by residues Asn-194, 223–228 (GYGWCG), Glu-246, Asn-281, 302–304 (SGH), and Asn-349.

The protein belongs to the adenosylhomocysteinase family. NAD(+) serves as cofactor.

It localises to the cytoplasm. It catalyses the reaction S-adenosyl-L-homocysteine + H2O = L-homocysteine + adenosine. It participates in amino-acid biosynthesis; L-homocysteine biosynthesis; L-homocysteine from S-adenosyl-L-homocysteine: step 1/1. In terms of biological role, may play a key role in the regulation of the intracellular concentration of adenosylhomocysteine. This chain is Adenosylhomocysteinase, found in Gloeobacter violaceus (strain ATCC 29082 / PCC 7421).